The following is a 361-amino-acid chain: MAKLPKITSLLPHSRVVSGIQPTGIPHIGNYLGSLKQWVQLQEEAARTPFSKCFFFVADLHALTVPQDPLKFRQARLDMLAALLAIGINPQKSTLFFQSDVAQHSELAWLLACSTSMGQLNRMTQWKSKLHLHDHDDLSFLDASATSSTRFNLGLFSYPVLQAADILLYGATHIPVGKDQSQHVELTRSIARSFNSSYKEKILTVPDIILNSSSSIMALCQPEKKMSKSDINSKNYILLSDSTGEIRKKISRAQTDNIKGITYGDSNRPGINNLINIFAAISDSTPSDIAQANASCSNAEFKEKVSSAIIRCLQPISTSFNEWRQNRELLRDIAKKGAEEAVAEASSCMHKLKTLTGLSVY.

Residues Met-1–Val-16 constitute a mitochondrion transit peptide. ATP contacts are provided by residues Gln-21 and His-27 to Asn-30. Residues Pro-22 to Asn-30 carry the 'HIGH' region motif. Residue Asp-165 participates in L-tryptophan binding. ATP contacts are provided by residues Gly-177–Asp-179, Lys-225–Ser-229, and Lys-228. Positions Lys-225–Ser-229 match the 'KMSKS' region motif.

It belongs to the class-I aminoacyl-tRNA synthetase family. As to quaternary structure, homodimer.

It localises to the mitochondrion matrix. It carries out the reaction tRNA(Trp) + L-tryptophan + ATP = L-tryptophyl-tRNA(Trp) + AMP + diphosphate + H(+). In Schizosaccharomyces pombe (strain 972 / ATCC 24843) (Fission yeast), this protein is Tryptophan--tRNA ligase, mitochondrial.